Here is an 812-residue protein sequence, read N- to C-terminus: Probable inorganic carbon transporter subunit DabA (812 aa).

Residues Cys337, Asp339, His499, and Cys514 each coordinate Zn(2+).

Belongs to the inorganic carbon transporter (TC 9.A.2) DabA family. As to quaternary structure, forms a complex with DabB. It depends on Zn(2+) as a cofactor.

Its subcellular location is the cell inner membrane. Its function is as follows. Part of an energy-coupled inorganic carbon pump. The polypeptide is Probable inorganic carbon transporter subunit DabA (Xanthomonas oryzae pv. oryzae (strain KACC10331 / KXO85)).